The primary structure comprises 95 residues: Small ribosomal subunit protein uS19 (95 aa).

The disordered stretch occupies residues Ala-75–Lys-95. Over residues Phe-80–Lys-95 the composition is skewed to basic residues.

Belongs to the universal ribosomal protein uS19 family.

Functionally, protein S19 forms a complex with S13 that binds strongly to the 16S ribosomal RNA. The chain is Small ribosomal subunit protein uS19 from Roseiflexus sp. (strain RS-1).